The sequence spans 95 residues: Integration host factor subunit beta (95 aa).

Residues S52–D95 form a disordered region. Basic and acidic residues predominate over residues P82–D95.

Belongs to the bacterial histone-like protein family. As to quaternary structure, heterodimer of an alpha and a beta chain.

This protein is one of the two subunits of integration host factor, a specific DNA-binding protein that functions in genetic recombination as well as in transcriptional and translational control. In Methylococcus capsulatus (strain ATCC 33009 / NCIMB 11132 / Bath), this protein is Integration host factor subunit beta.